The following is a 197-amino-acid chain: MKLASLLVGSLMLAVPALAFEQSAIQTLRDATTATGAYHSKFPHALSEGPEAAISNINSATARAADEAKTAMTGLTVQSQSLAGALKGVSWISPHVLVVLFMPKYGVLTMFVWQFFDAMTTLSHDATNPAVFCSKNIDRLGPSMGWNLRLPHATTLKRDCKDGEKLVADLAGSYKIAVDSLEQAQAMLESPQGKCKQ.

The signal sequence occupies residues 1–19; that stretch reads MKLASLLVGSLMLAVPALA.

It is found in the secreted. This is an uncharacterized protein from Arthroderma benhamiae (strain ATCC MYA-4681 / CBS 112371) (Trichophyton mentagrophytes).